Consider the following 263-residue polypeptide: Phosphoribosylaminoimidazole-succinocarboxamide synthase (263 aa).

The disordered stretch occupies residues 239–263 (MNENEPPKPAGPVLVSSKPDGETRH).

This sequence belongs to the SAICAR synthetase family.

The catalysed reaction is 5-amino-1-(5-phospho-D-ribosyl)imidazole-4-carboxylate + L-aspartate + ATP = (2S)-2-[5-amino-1-(5-phospho-beta-D-ribosyl)imidazole-4-carboxamido]succinate + ADP + phosphate + 2 H(+). Its pathway is purine metabolism; IMP biosynthesis via de novo pathway; 5-amino-1-(5-phospho-D-ribosyl)imidazole-4-carboxamide from 5-amino-1-(5-phospho-D-ribosyl)imidazole-4-carboxylate: step 1/2. The sequence is that of Phosphoribosylaminoimidazole-succinocarboxamide synthase from Chelativorans sp. (strain BNC1).